The following is a 248-amino-acid chain: Flavodoxin/ferredoxin--NADP reductase (248 aa).

In terms of domain architecture, FAD-binding FR-type spans 2–101 (ADWVTGKVTK…SEAAGFFVLD (100 aa)). FAD contacts are provided by residues 50-53 (RAYS), Tyr-66, 74-76 (KLS), and Thr-116. NADP(+) is bound by residues 143–144 (AR), 173–174 (SR), Arg-184, 214–216 (NPQ), and Asp-220. 247-248 (YW) serves as a coordination point for FAD.

This sequence belongs to the ferredoxin--NADP reductase type 1 family. Requires FAD as cofactor.

It is found in the cytoplasm. The enzyme catalyses 2 reduced [2Fe-2S]-[ferredoxin] + NADP(+) + H(+) = 2 oxidized [2Fe-2S]-[ferredoxin] + NADPH. It catalyses the reaction reduced [flavodoxin] + NADP(+) = oxidized [flavodoxin] + NADPH + 2 H(+). In terms of biological role, transports electrons between flavodoxin or ferredoxin and NADPH. The chain is Flavodoxin/ferredoxin--NADP reductase (fpr) from Shigella flexneri.